Here is a 90-residue protein sequence, read N- to C-terminus: Cell division topological specificity factor (90 aa).

The interval 1 to 21 (MAGFWSKIFGNDEKPSSAQTA) is disordered. Positions 10 to 21 (GNDEKPSSAQTA) are enriched in basic and acidic residues.

Belongs to the MinE family.

Its function is as follows. Prevents the cell division inhibition by proteins MinC and MinD at internal division sites while permitting inhibition at polar sites. This ensures cell division at the proper site by restricting the formation of a division septum at the midpoint of the long axis of the cell. This is Cell division topological specificity factor from Acinetobacter baylyi (strain ATCC 33305 / BD413 / ADP1).